A 525-amino-acid chain; its full sequence is 2-isopropylmalate synthase (525 aa).

The Pyruvate carboxyltransferase domain occupies 5 to 267 (VIIFDTTLRD…HTGIHHQEIY (263 aa)). Mn(2+)-binding residues include D14, H202, H204, and N238. Positions 392 to 525 (RLEYFSVQSS…NNSQDMQETV (134 aa)) are regulatory domain.

The protein belongs to the alpha-IPM synthase/homocitrate synthase family. LeuA type 1 subfamily. As to quaternary structure, homodimer. The cofactor is Mn(2+).

The protein resides in the cytoplasm. It carries out the reaction 3-methyl-2-oxobutanoate + acetyl-CoA + H2O = (2S)-2-isopropylmalate + CoA + H(+). Its pathway is amino-acid biosynthesis; L-leucine biosynthesis; L-leucine from 3-methyl-2-oxobutanoate: step 1/4. In terms of biological role, catalyzes the condensation of the acetyl group of acetyl-CoA with 3-methyl-2-oxobutanoate (2-ketoisovalerate) to form 3-carboxy-3-hydroxy-4-methylpentanoate (2-isopropylmalate). The polypeptide is 2-isopropylmalate synthase (Sodalis glossinidius (strain morsitans)).